A 578-amino-acid polypeptide reads, in one-letter code: A-type ATP synthase subunit A (578 aa).

An ATP-binding site is contributed by 228 to 235 (GPFGSGKT).

Belongs to the ATPase alpha/beta chains family. As to quaternary structure, has multiple subunits with at least A(3), B(3), C, D, E, F, G, I and proteolipid K(x).

The protein localises to the cell membrane. The enzyme catalyses ATP + H2O + 4 H(+)(in) = ADP + phosphate + 5 H(+)(out). ATP hydrolysis stimulated by sulfite, ethanol, glycerol, magnesium and zinc ions, inhibited by diethylstilbestrol (DES) and less well by N,N-dicyclohexylcarbodiimide (DCCD). Component of the A-type ATP synthase that produces ATP from ADP in the presence of a proton gradient across the membrane. The A chain is the catalytic subunit. This chain is A-type ATP synthase subunit A, found in Methanosarcina mazei (strain ATCC BAA-159 / DSM 3647 / Goe1 / Go1 / JCM 11833 / OCM 88) (Methanosarcina frisia).